The sequence spans 225 residues: Pyridoxine/pyridoxamine 5'-phosphate oxidase (225 aa).

Residues 21–24 and lysine 79 each bind substrate; that span reads RKSY. FMN is bound by residues 74–79, 89–90, arginine 95, and lysine 96; these read RVVLIK and YT. Tyrosine 136, arginine 140, and serine 144 together coordinate substrate. FMN is bound by residues 153–154 and tryptophan 197; that span reads QS. 203–205 serves as a coordination point for substrate; the sequence is RLH. Arginine 207 is an FMN binding site.

The protein belongs to the pyridoxamine 5'-phosphate oxidase family. In terms of assembly, homodimer. It depends on FMN as a cofactor.

The catalysed reaction is pyridoxamine 5'-phosphate + O2 + H2O = pyridoxal 5'-phosphate + H2O2 + NH4(+). It carries out the reaction pyridoxine 5'-phosphate + O2 = pyridoxal 5'-phosphate + H2O2. Its pathway is cofactor metabolism; pyridoxal 5'-phosphate salvage; pyridoxal 5'-phosphate from pyridoxamine 5'-phosphate: step 1/1. It participates in cofactor metabolism; pyridoxal 5'-phosphate salvage; pyridoxal 5'-phosphate from pyridoxine 5'-phosphate: step 1/1. Its function is as follows. Catalyzes the oxidation of either pyridoxine 5'-phosphate (PNP) or pyridoxamine 5'-phosphate (PMP) into pyridoxal 5'-phosphate (PLP). This Paracidovorax citrulli (strain AAC00-1) (Acidovorax citrulli) protein is Pyridoxine/pyridoxamine 5'-phosphate oxidase.